A 2131-amino-acid chain; its full sequence is MPLSPPAQGDPGEPSPCRPPKKHTTFHLWRSKKKQQPAPPDCGVFVPHPLPAPAGEARALDVVDGKYVVRDSQEFPLHCGESQFFHTTSEALGSLLLESGIFKKSRAQPPEDNRRKPVLGKLGTLFTAGRRRNSRNGLESPTRSNAKPLSPKDVVASPKLPERESERSRSQSSQLKQTDTSEEGSPRENPREAEGELPESGGPAAPPDAELSPRWSSSAAAVAVQQCHENDSPQLEPLEAEGEPFPDATTTAKQLHSSPGNSSRQENAETPARSPGEDASPGAGHEQEAFLGVRGAPGSPTQERPAGGLGEAPNGAPSVCAEEGSLGPRNARSQPPKGASDLPGEPPAEGAAHTASSAQADCTARPKGHAHPAKVLTLDIYLSKTEGAQVDEPVVITPRAEDCGDWDDMEKRSSGRRSGRRRGSQKSTDSPGADAELPESAARDDAVFDDEVAPNAASDNASAEKKVKSPRAALDGGVASAASPESKPSPGTKGQLRGESDRSKQPPPASSPTKRKGRSRALEAVPAPPASGPRAPAKESPPKRVPDPSPVTKGTAAESGEEAARAIPRELPVKSSSLLPEIKPEHKRGPLPNHFNGRAEGGRSRELGRAAGAPGASDADGLKPRNHFGVGRSTVTTKVTLPAKPKHVELNLKTPKNLDSLGNEHNPFSQPVHKGNTATKISLFENKRTNSSPRHTDIRGQRNTPASSKTFVGRAKLNLAKKAKEMEQPEKKVMPNSPQNGVLVKETAIETKVTVSEEEILPATRGMNGDSSENQALGPQPNQDDKADVQTDAGCLSEPVASALIPVKDHKLLEKEDSEAADSKSLVLENVTDTAQDIPTTVDTKDLPPTAMPKPQHTFSDSQSPAESSPGPSLSLSAPAPGDVPKDTCVQSPISSFPCTDLKVSENHKGCVLPVSRQNNEKMPLLELGGETTPPLSTERSPEAVGSECPSRVLVQVRSFVLPVESTQDVSSQVIPESSEVREVQLPTCHSNEPEVVSVASCAPPQEEVLGNEHSHCTAELAAKSGPQVIPPASEKTLPIQAQSQGSRTPLMAESSPTNSPSSGNHLATPQRPDQTVTNGQDSPASLLNISAGSDDSVFDSSSDMEKFTEIIKQMDSAVCMPMKRKKARMPNSPAPHFAMPPIHEDHLEKVFDPKVFTFGLGKKKESQPEMSPALHLMQNLDTKSKLRPKRASAEQSVLFKSLHTNTNGNSEPLVMPEINDKENRDVTNGGIKRSRLEKSALFSSLLSSLPQDKIFSPSVTSVNTMTTAFSTSQNGSLSQSSVSQPTTEGAPPCGLNKEQSNLLPDNSLKVFNFNSSSTSHSSLKSPSHMEKYPQKEKTKEDLDSRSNLHLPETKFSELSKLKNDDMEKANHIESVIKSNLPNCANSDTDFMGLFKSSRYDPSISFSGMSLSDTMTLRGSVQNKLNPRPGKVVIYSEPDVSEKCIEVFSDIQDCSSWSLSPVILIKVVRGCWILYEQPNFEGHSIPLEEGELELSGLWGIEDILERHEEAESDKPVVIGSIRHVVQDYRVSHIDLFTEPEGLGILSSYFDDTEEMQGFGVMQKTCSMKVHWGTWLIYEEPGFQGVPFILEPGEYPDLSFWDTEEAYIGSMRPLKMGGRKVEFPTDPKVVVYEKPFFEGKCVELETGMCSFVMEGGETEEATGDDHLPFTSVGSMKVLRGIWVAYEKPGFTGHQYLLEEGEYRDWKAWGGYNGELQSLRPILGDFSNAHMIMYSEKNFGSKGSSIDVLGIVANLKETGYGVKTQSINVLSGVWVAYENPDFTGEQYILDKGFYTSFEDWGGKNCKISSVQPICLDSFTGPRRRNQIHLFSEPQFQGHSQSFEETTSQIDDSFSTKSCRVSGGSWVVYDGENFTGNQYVLEEGHYPCLSAMGCPPGATFKSLRFIDVEFSEPTIILFEREDFKGKKIELNAETVNLRSLGFNTQIRSVQVIGGIWVTYEYGSYRGRQFLLSPAEVPNWYEFSGCRQIGSLRPFVQKRIYFRLRNKATGLFMSTNGNLEDLKLLRIQVMEDVGADDQIWIYQEGCIKCRIAEDCCLTIVGSLVTSGSKLGLALDQNADSQFWSLKSDGRIYSKLKPNLVLDIKGGTQYDQNHIILNTVSKEKFTQVWEAMVLYT.

Disordered regions lie at residues 1-53, 104-370, 385-674, 688-707, and 723-743; these read MPLS…LPAP, KSRA…KGHA, TEGA…PVHK, RTNS…TPAS, and AKEM…NGVL. A compositionally biased stretch (basic residues) spans 19–35; it reads PPKKHTTFHLWRSKKKQ. Residues 135–147 are compositionally biased toward polar residues; it reads RNGLESPTRSNAK. Composition is skewed to basic and acidic residues over residues 160–169 and 184–194; these read LPERESERSR and GSPRENPREAE. The span at 248–265 shows a compositional bias: polar residues; sequence ATTTAKQLHSSPGNSSRQ. Basic residues predominate over residues 414–424; it reads SGRRSGRRRGS. Low complexity predominate over residues 479-490; the sequence is ASAASPESKPSP. Phosphoserine is present on residues serine 483 and serine 489. Composition is skewed to basic and acidic residues over residues 536-546 and 562-572; these read PAKESPPKRVP and EAARAIPRELP. Residues 609 to 619 show a composition bias toward low complexity; that stretch reads RAAGAPGASDA. Residues 723-733 show a composition bias toward basic and acidic residues; that stretch reads AKEMEQPEKKV. Phosphoserine is present on residues serine 737 and serine 756. 2 disordered regions span residues 758–791 and 837–889; these read EEIL…DVQT and DIPT…KDTC. Residues 769 to 782 are compositionally biased toward polar residues; it reads GDSSENQALGPQPN. Low complexity predominate over residues 864–881; the sequence is SPAESSPGPSLSLSAPAP. Serine 892 carries the post-translational modification Phosphoserine. 4 disordered regions span residues 926 to 947, 1041 to 1101, 1271 to 1302, and 1316 to 1348; these read LELG…AVGS, QAQS…VFDS, STSQ…EQSN, and SSST…SRSN. Threonine 933 is modified (phosphothreonine). A compositionally biased stretch (polar residues) spans 1055-1089; the sequence is SSPTNSPSSGNHLATPQRPDQTVTNGQDSPASLLN. Low complexity-rich tracts occupy residues 1091–1101, 1271–1288, and 1316–1327; these read SAGSDDSVFDS, STSQ…QPTT, and SSSTSHSSLKSP. Residues 1328 to 1348 show a composition bias toward basic and acidic residues; the sequence is SHMEKYPQKEKTKEDLDSRSN. Beta/gamma crystallin 'Greek key' domains follow at residues 1430–1469, 1470–1525, 1531–1571, 1572–1614, 1626–1678, 1679–1721, 1727–1769, 1770–1812, 1823–1860, 1861–1904, 1910–1950, and 1951–1992; these read GKVV…KVVR, GCWI…RHVV, SHID…KVHW, GTWL…RPLK, PKVV…KVLR, GIWV…RPIL, AHMI…NVLS, GVWV…QPIC, NQIH…RVSG, GSWV…RFID, PTII…QVIG, and GIWV…RPFV. In terms of domain architecture, Ricin B-type lectin spans 1994–2127; it reads KRIYFRLRNK…EKFTQVWEAM (134 aa).

It belongs to the beta/gamma-crystallin family.

Functionally, may function as suppressor of malignant melanoma. It may exert its effects through interactions with the cytoskeleton. The sequence is that of Beta/gamma crystallin domain-containing protein 1 from Homo sapiens (Human).